A 676-amino-acid chain; its full sequence is MAPFLRIAFNSYELGSLQAEDEANQPFCAVKMKEALSTERGKTLVQKKPTMYPEWKSTFDAHIYEGRVIQIVLMRAAEEPVSEVTVGVSVLAERCKKNNGKAEFWLDLQPQAKVLMSVQYFLEDVDCKQSMRSEDEAKFPTMNRRGAIKQAKIHYIKNHEFIATFFGQPTFCSVCKDFVWGLNKQGYKCRQCNAAIHKKCIDKIIGRCTGTAANSRDTIFQKERFNIDMPHRFKVHNYMSPTFCDHCGSLLWGLVKQGLKCEDCGMNVHHKCREKVANLCGINQKLLAEALNQVTQRASRRSDSASSEPVGIYQGFEKKTGVAGEDMQDNSGTYGKIWEGSSKCNINNFIFHKVLGKGSFGKVLLGELKGRGEYFAIKALKKDVVLIDDDVECTMVEKRVLTLAAENPFLTHLICTFQTKDHLFFVMEFLNGGDLMYHIQDKGRFELYRATFYAAEIMCGLQFLHSKGIIYRDLKLDNVLLDRDGHIKIADFGMCKENIFGESRASTFCGTPDYIAPEILQGLKYTFSVDWWSFGVLLYEMLIGQSPFHGDDEDELFESIRVDTPHYPRWITKESKDILEKLFEREPTKRLGVTGNIKIHPFFKTINWTLLEKRRLEPPFRPKVKSPRDYSNFDQEFLNEKARLSYSDKNLIDSMDQSAFAGFSFVNPKFEHLLED.

The C2 domain maps to 1–106 (MAPFLRIAFN…KNNGKAEFWL (106 aa)). Thr-43 and Thr-50 each carry phosphothreonine. Tyr-64 carries the phosphotyrosine modification. Ser-130 bears the Phosphoserine mark. Thr-141 carries the post-translational modification Phosphothreonine. Position 155 is a phosphotyrosine (Tyr-155). The Phorbol-ester/DAG-type 1 zinc finger occupies 158 to 208 (NHEFIATFFGQPTFCSVCKDFVWGLNKQGYKCRQCNAAIHKKCIDKIIGRC). Thr-218 is subject to Phosphothreonine. A Phorbol-ester/DAG-type 2 zinc finger spans residues 230–280 (PHRFKVHNYMSPTFCDHCGSLLWGLVKQGLKCEDCGMNVHHKCREKVANLC). Phosphoserine; by autocatalysis is present on residues Ser-299, Ser-302, and Ser-304. Ser-307 is modified (phosphoserine). Tyr-313 is modified (phosphotyrosine). The residue at position 334 (Tyr-334) is a Phosphotyrosine; by SRC. Residues 349–603 (FIFHKVLGKG…TGNIKIHPFF (255 aa)) enclose the Protein kinase domain. Residue 355-363 (LGKGSFGKV) participates in ATP binding. The residue at position 374 (Tyr-374) is a Phosphotyrosine. Lys-378 contributes to the ATP binding site. Thr-451 bears the Phosphothreonine mark. The active-site Proton acceptor is the Asp-473. A phosphoserine mark is found at Ser-503 and Ser-506. Thr-507 is subject to Phosphothreonine; by autocatalysis. Tyr-567 carries the post-translational modification Phosphotyrosine. The 72-residue stretch at 604-675 (KTINWTLLEK…VNPKFEHLLE (72 aa)) folds into the AGC-kinase C-terminal domain. Phosphoserine occurs at positions 645, 654, 658, and 664.

Belongs to the protein kinase superfamily. AGC Ser/Thr protein kinase family. PKC subfamily. In terms of assembly, interacts with PDPK1 (via N-terminal region). Interacts with RAD9A. Interacts with CDCP1. Interacts with MUC1. Interacts with VASP. Interacts with CAVIN3. Interacts with PRKD2 (via N-terminus and zing-finger domain 1 and 2) in response to oxidative stress; the interaction is independent of PRKD2 tyrosine phosphorylation. Interacts with PLSC3; interaction is enhanced by UV irradiation. Interacts with PRKCH upstream open reading frame 2; the interaction leads to inhibition of kinase activity. Post-translationally, autophosphorylated and/or phosphorylated at Thr-507, within the activation loop; phosphorylation at Thr-507 is not a prerequisite for enzymatic activity. Autophosphorylated at Ser-299, Ser-302 and Ser-304. Upon TNFSF10/TRAIL treatment, phosphorylated at Tyr-155; phosphorylation is required for its translocation to the endoplasmic reticulum and cleavage by caspase-3. Phosphorylated at Tyr-313, Tyr-334 and Tyr-567; phosphorylation of Tyr-313 and Tyr-567 following thrombin or zymosan stimulation potentiates its kinase activity. Phosphorylated by protein kinase PDPK1; phosphorylation is inhibited by the apoptotic C-terminal cleavage product of PKN2. Phosphorylated at Tyr-313 through a SYK and SRC mechanism downstream of C-type lectin receptors activation, promoting its activation. Proteolytically cleaved into a catalytic subunit and a regulatory subunit by caspase-3 during apoptosis which results in kinase activation.

The protein localises to the cytoplasm. Its subcellular location is the perinuclear region. It localises to the nucleus. The protein resides in the cell membrane. It is found in the mitochondrion. The protein localises to the endomembrane system. The enzyme catalyses L-seryl-[protein] + ATP = O-phospho-L-seryl-[protein] + ADP + H(+). It carries out the reaction L-threonyl-[protein] + ATP = O-phospho-L-threonyl-[protein] + ADP + H(+). It catalyses the reaction L-tyrosyl-[protein] + ATP = O-phospho-L-tyrosyl-[protein] + ADP + H(+). With respect to regulation, novel PKCs (PRKCD, PRKCE, PRKCH and PRKCQ) are calcium-insensitive, but activated by diacylglycerol (DAG) and phosphatidylserine. Three specific sites; Thr-507 (activation loop of the kinase domain), Ser-645 (turn motif) and Ser-664 (hydrophobic region), need to be phosphorylated for its full activation. Activated by caspase-3 (CASP3) cleavage during apoptosis. After cleavage, the pseudosubstrate motif in the regulatory subunit is released from the substrate recognition site of the catalytic subunit, which enables PRKCD to become constitutively activated. The catalytic subunit which displays properties of a sphingosine-dependent protein kinase is activated by D-erythro-sphingosine (Sph) or N,N-dimethyl-D-erythrosphingosine (DMS) or N,N,N-trimethyl-D-erythrosphingosine (TMS), but not by ceramide or Sph-1-P and is strongly inhibited by phosphatidylserine. Inhibited by PRKCH upstream open reading frame 2. In terms of biological role, calcium-independent, phospholipid- and diacylglycerol (DAG)-dependent serine/threonine-protein kinase that plays contrasting roles in cell death and cell survival by functioning as a pro-apoptotic protein during DNA damage-induced apoptosis, but acting as an anti-apoptotic protein during cytokine receptor-initiated cell death, is involved in tumor suppression as well as survival of several cancers, is required for oxygen radical production by NADPH oxidase and acts as positive or negative regulator in platelet functional responses. Negatively regulates B cell proliferation and also has an important function in self-antigen induced B cell tolerance induction. Upon DNA damage, activates the promoter of the death-promoting transcription factor BCLAF1/Btf to trigger BCLAF1-mediated p53/TP53 gene transcription and apoptosis. In response to oxidative stress, interact with and activate CHUK/IKKA in the nucleus, causing the phosphorylation of p53/TP53. In the case of ER stress or DNA damage-induced apoptosis, can form a complex with the tyrosine-protein kinase ABL1 which trigger apoptosis independently of p53/TP53. In cytosol can trigger apoptosis by activating MAPK11 or MAPK14, inhibiting AKT1 and decreasing the level of X-linked inhibitor of apoptosis protein (XIAP), whereas in nucleus induces apoptosis via the activation of MAPK8 or MAPK9. Upon ionizing radiation treatment, is required for the activation of the apoptosis regulators BAX and BAK, which trigger the mitochondrial cell death pathway. Can phosphorylate MCL1 and target it for degradation which is sufficient to trigger for BAX activation and apoptosis. Is required for the control of cell cycle progression both at G1/S and G2/M phases. Mediates phorbol 12-myristate 13-acetate (PMA)-induced inhibition of cell cycle progression at G1/S phase by up-regulating the CDK inhibitor CDKN1A/p21 and inhibiting the cyclin CCNA2 promoter activity. In response to UV irradiation can phosphorylate CDK1, which is important for the G2/M DNA damage checkpoint activation. Can protect glioma cells from the apoptosis induced by TNFSF10/TRAIL, probably by inducing increased phosphorylation and subsequent activation of AKT1. Is highly expressed in a number of cancer cells and promotes cell survival and resistance against chemotherapeutic drugs by inducing cyclin D1 (CCND1) and hyperphosphorylation of RB1, and via several pro-survival pathways, including NF-kappa-B, AKT1 and MAPK1/3 (ERK1/2). Involved in antifungal immunity by mediating phosphorylation and activation of CARD9 downstream of C-type lectin receptors activation, promoting interaction between CARD9 and BCL10, followed by activation of NF-kappa-B and MAP kinase p38 pathways. Can also act as tumor suppressor upon mitogenic stimulation with PMA or TPA. In N-formyl-methionyl-leucyl-phenylalanine (fMLP)-treated cells, is required for NCF1 (p47-phox) phosphorylation and activation of NADPH oxidase activity, and regulates TNF-elicited superoxide anion production in neutrophils, by direct phosphorylation and activation of NCF1 or indirectly through MAPK1/3 (ERK1/2) signaling pathways. May also play a role in the regulation of NADPH oxidase activity in eosinophil after stimulation with IL5, leukotriene B4 or PMA. In collagen-induced platelet aggregation, acts a negative regulator of filopodia formation and actin polymerization by interacting with and negatively regulating VASP phosphorylation. Downstream of PAR1, PAR4 and CD36/GP4 receptors, regulates differentially platelet dense granule secretion; acts as a positive regulator in PAR-mediated granule secretion, whereas it negatively regulates CD36/GP4-mediated granule release. Phosphorylates MUC1 in the C-terminal and regulates the interaction between MUC1 and beta-catenin. The catalytic subunit phosphorylates 14-3-3 proteins (YWHAB, YWHAZ and YWHAH) in a sphingosine-dependent fashion. Phosphorylates ELAVL1 in response to angiotensin-2 treatment. Phosphorylates mitochondrial phospholipid scramblase 3 (PLSCR3), resulting in increased cardiolipin expression on the mitochondrial outer membrane which facilitates apoptosis. Phosphorylates SMPD1 which induces SMPD1 secretion. This Homo sapiens (Human) protein is Protein kinase C delta type.